A 180-amino-acid chain; its full sequence is Dynactin subunit 6 (180 aa).

It belongs to the dynactin subunits 5/6 family. Dynactin subunit 6 subfamily. Subunit of dynactin, a multiprotein complex part of a tripartite complex with dynein and a adapter, such as BICDL1, BICD2 or HOOK3. The dynactin complex is built around ACTR1A/ACTB filament and consists of an actin-related filament composed of a shoulder domain, a pointed end and a barbed end.

Its subcellular location is the cytoplasm. The protein resides in the cytoskeleton. Part of the dynactin complex that activates the molecular motor dynein for ultra-processive transport along microtubules. This is Dynactin subunit 6 (dnc-6) from Caenorhabditis elegans.